Here is a 384-residue protein sequence, read N- to C-terminus: 8-amino-7-oxononanoate synthase (384 aa).

Arg-21 is a binding site for substrate. 108–109 (GF) provides a ligand contact to pyridoxal 5'-phosphate. His-133 provides a ligand contact to substrate. 3 residues coordinate pyridoxal 5'-phosphate: Ser-179, His-207, and Thr-233. Residue Lys-236 is modified to N6-(pyridoxal phosphate)lysine. Thr-352 is a binding site for substrate.

The protein belongs to the class-II pyridoxal-phosphate-dependent aminotransferase family. BioF subfamily. In terms of assembly, homodimer. The cofactor is pyridoxal 5'-phosphate.

The catalysed reaction is 6-carboxyhexanoyl-[ACP] + L-alanine + H(+) = (8S)-8-amino-7-oxononanoate + holo-[ACP] + CO2. It functions in the pathway cofactor biosynthesis; biotin biosynthesis. Functionally, catalyzes the decarboxylative condensation of pimeloyl-[acyl-carrier protein] and L-alanine to produce 8-amino-7-oxononanoate (AON), [acyl-carrier protein], and carbon dioxide. The polypeptide is 8-amino-7-oxononanoate synthase (Escherichia coli (strain UTI89 / UPEC)).